We begin with the raw amino-acid sequence, 899 residues long: Pre-mRNA-splicing factor 6 (899 aa).

The segment at methionine 1–aspartate 65 is disordered. A compositionally biased stretch (basic and acidic residues) spans threonine 28–leucine 51. HAT repeat units follow at residues glutamate 221–lysine 253, arginine 255–serine 287, valine 289–serine 318, threonine 319–aspartate 350, alanine 352–tyrosine 381, asparagine 383–proline 414, proline 493–serine 525, asparagine 545–glutamine 578, leucine 608–tyrosine 645, leucine 648–serine 680, glycine 682–isoleucine 714, glycine 751–histidine 783, and alanine 819–arginine 851.

Component of the U4/U6-U5 tri-snRNP complex composed of the U4, U6 and U5 snRNAs and at least PRP3, PRP4, PRP6, PRP8, PRP18, PRP31, PRP38, SNU13, SNU23, SNU66, SNU114, SPP381, SMB1, SMD1, SMD2, SMD3, SMX2, SMX3, LSM2, LSM3, LSM4, LSM5, LSM6, LSM7, LSM8, BRR2 and DIB1.

The protein localises to the nucleus. In terms of biological role, participates in pre-mRNA splicing. Part of the U4/U5/U6 tri-snRNP complex, one of the building blocks of the spliceosome. The polypeptide is Pre-mRNA-splicing factor 6 (PRP6) (Saccharomyces cerevisiae (strain ATCC 204508 / S288c) (Baker's yeast)).